Consider the following 674-residue polypeptide: tRNA 5-methylaminomethyl-2-thiouridine biosynthesis bifunctional protein MnmC (674 aa).

The tract at residues 1-248 (MAASSLPSHN…KREMCFGRYA (248 aa)) is tRNA (mnm(5)s(2)U34)-methyltransferase. The FAD-dependent cmnm(5)s(2)U34 oxidoreductase stretch occupies residues 276–674 (IGAGLAGATV…AIRHWRSGKR (399 aa)).

The protein in the N-terminal section; belongs to the methyltransferase superfamily. tRNA (mnm(5)s(2)U34)-methyltransferase family. In the C-terminal section; belongs to the DAO family. It depends on FAD as a cofactor.

The protein localises to the cytoplasm. It catalyses the reaction 5-aminomethyl-2-thiouridine(34) in tRNA + S-adenosyl-L-methionine = 5-methylaminomethyl-2-thiouridine(34) in tRNA + S-adenosyl-L-homocysteine + H(+). In terms of biological role, catalyzes the last two steps in the biosynthesis of 5-methylaminomethyl-2-thiouridine (mnm(5)s(2)U) at the wobble position (U34) in tRNA. Catalyzes the FAD-dependent demodification of cmnm(5)s(2)U34 to nm(5)s(2)U34, followed by the transfer of a methyl group from S-adenosyl-L-methionine to nm(5)s(2)U34, to form mnm(5)s(2)U34. This Hydrogenovibrio crunogenus (strain DSM 25203 / XCL-2) (Thiomicrospira crunogena) protein is tRNA 5-methylaminomethyl-2-thiouridine biosynthesis bifunctional protein MnmC.